Reading from the N-terminus, the 369-residue chain is Ribosomal RNA large subunit methyltransferase G (369 aa).

Belongs to the methyltransferase superfamily. RlmG family.

Its subcellular location is the cytoplasm. It carries out the reaction guanosine(1835) in 23S rRNA + S-adenosyl-L-methionine = N(2)-methylguanosine(1835) in 23S rRNA + S-adenosyl-L-homocysteine + H(+). Its function is as follows. Specifically methylates the guanine in position 1835 (m2G1835) of 23S rRNA. This chain is Ribosomal RNA large subunit methyltransferase G, found in Magnetococcus marinus (strain ATCC BAA-1437 / JCM 17883 / MC-1).